The primary structure comprises 197 residues: MSGTLSQGSSPARLTLWEEENFQGRRCELMSDCSSIRELSGFRRVRSVKVESGAWVGFEYPDFQGQQFILEKGDYPRSTAWSGSSGYRTDQLLSFRPLLCANHSDSRVTLYEGENFQGCKFELSDDYPSLPAMGWASKDVGSLKVTSGAWVGYQYPGFRGYQYVLEQDRHSGEFRKYSEFGTQAHTNQLQSIRRVQH.

The N-terminal arm stretch occupies residues 1–11 (MSGTLSQGSSP). Beta/gamma crystallin 'Greek key' domains follow at residues 12–52 (ARLT…KVES) and 53–99 (GAWV…RPLL). Residues 100-105 (CANHSD) are connecting peptide. Beta/gamma crystallin 'Greek key' domains follow at residues 106–147 (SRVT…KVTS) and 148–196 (GAWV…RRVQ).

It belongs to the beta/gamma-crystallin family. In terms of assembly, homo/heterodimer, or complexes of higher-order. The structure of beta-crystallin oligomers seems to be stabilized through interactions between the N-terminal arms.

In terms of biological role, crystallins are the dominant structural components of the vertebrate eye lens. This Macropus fuliginosus (Western gray kangaroo) protein is Beta-crystallin A2 (CRYBA2).